A 634-amino-acid chain; its full sequence is DNA-directed RNA polymerase subunit gamma (634 aa).

The Zn(2+) site is built by C74, C76, C89, and C92. 3 residues coordinate Mg(2+): D471, D473, and D475.

This sequence belongs to the RNA polymerase beta' chain family. RpoC1 subfamily. In cyanobacteria the RNAP catalytic core is composed of 2 alpha, 1 beta, 1 beta', 1 gamma and 1 omega subunit. When a sigma factor is associated with the core the holoenzyme is formed, which can initiate transcription. Mg(2+) is required as a cofactor. Requires Zn(2+) as cofactor.

The enzyme catalyses RNA(n) + a ribonucleoside 5'-triphosphate = RNA(n+1) + diphosphate. In terms of biological role, DNA-dependent RNA polymerase catalyzes the transcription of DNA into RNA using the four ribonucleoside triphosphates as substrates. The chain is DNA-directed RNA polymerase subunit gamma from Prochlorococcus marinus (strain MIT 9515).